A 262-amino-acid polypeptide reads, in one-letter code: Ribosome maturation factor RimP (262 aa).

Residues 197–262 (RELGVLPPPP…LGQTDPTEGD (66 aa)) form a disordered region. Basic residues predominate over residues 223-233 (KLPKAKLKAAK). Residues 240–254 (TKEHRLAAAERKRLG) are compositionally biased toward basic and acidic residues.

It belongs to the RimP family.

The protein resides in the cytoplasm. Functionally, required for maturation of 30S ribosomal subunits. This Rhodopseudomonas palustris (strain BisB18) protein is Ribosome maturation factor RimP.